The sequence spans 226 residues: 7-cyano-7-deazaguanine synthase (226 aa).

10–20 contacts ATP; sequence LSGGLDSATAA. Residues cysteine 191, cysteine 199, cysteine 202, and cysteine 205 each coordinate Zn(2+).

It belongs to the QueC family. Requires Zn(2+) as cofactor.

It carries out the reaction 7-carboxy-7-deazaguanine + NH4(+) + ATP = 7-cyano-7-deazaguanine + ADP + phosphate + H2O + H(+). Its pathway is purine metabolism; 7-cyano-7-deazaguanine biosynthesis. Its function is as follows. Catalyzes the ATP-dependent conversion of 7-carboxy-7-deazaguanine (CDG) to 7-cyano-7-deazaguanine (preQ(0)). This is 7-cyano-7-deazaguanine synthase from Prochlorococcus marinus (strain MIT 9303).